The sequence spans 143 residues: Anti-sigma F factor (143 aa).

Belongs to the anti-sigma-factor family.

The enzyme catalyses L-seryl-[protein] + ATP = O-phospho-L-seryl-[protein] + ADP + H(+). The catalysed reaction is L-threonyl-[protein] + ATP = O-phospho-L-threonyl-[protein] + ADP + H(+). Binds to sigma F and blocks its ability to form an RNA polymerase holoenzyme (E-sigma F). Phosphorylates SpoIIAA on a serine residue. This phosphorylation may enable SpoIIAA to act as an anti-anti-sigma factor that counteracts SpoIIAB and thus releases sigma F from inhibition. This chain is Anti-sigma F factor, found in Clostridium botulinum (strain Alaska E43 / Type E3).